We begin with the raw amino-acid sequence, 130 residues long: Small ribosomal subunit protein uS8 (130 aa).

Belongs to the universal ribosomal protein uS8 family. As to quaternary structure, part of the 30S ribosomal subunit. Contacts proteins S5 and S12.

One of the primary rRNA binding proteins, it binds directly to 16S rRNA central domain where it helps coordinate assembly of the platform of the 30S subunit. The polypeptide is Small ribosomal subunit protein uS8 (Buchnera aphidicola subsp. Acyrthosiphon pisum (strain 5A)).